Consider the following 145-residue polypeptide: D-aminoacyl-tRNA deacylase (145 aa).

The short motif at 137–138 (GP) is the Gly-cisPro motif, important for rejection of L-amino acids element.

It belongs to the DTD family. Homodimer.

The protein resides in the cytoplasm. It catalyses the reaction glycyl-tRNA(Ala) + H2O = tRNA(Ala) + glycine + H(+). It carries out the reaction a D-aminoacyl-tRNA + H2O = a tRNA + a D-alpha-amino acid + H(+). Its function is as follows. An aminoacyl-tRNA editing enzyme that deacylates mischarged D-aminoacyl-tRNAs. Also deacylates mischarged glycyl-tRNA(Ala), protecting cells against glycine mischarging by AlaRS. Acts via tRNA-based rather than protein-based catalysis; rejects L-amino acids rather than detecting D-amino acids in the active site. By recycling D-aminoacyl-tRNA to D-amino acids and free tRNA molecules, this enzyme counteracts the toxicity associated with the formation of D-aminoacyl-tRNA entities in vivo and helps enforce protein L-homochirality. In Shigella dysenteriae serotype 1 (strain Sd197), this protein is D-aminoacyl-tRNA deacylase.